A 62-amino-acid polypeptide reads, in one-letter code: Large ribosomal subunit protein uL15 (62 aa).

It belongs to the universal ribosomal protein uL15 family.

The polypeptide is Large ribosomal subunit protein uL15 (RPL28) (Candida albicans (Yeast)).